Here is a 289-residue protein sequence, read N- to C-terminus: ADP-polyphosphate phosphotransferase (289 aa).

This sequence belongs to the polyphosphate kinase 2 (PPK2) family. Class I subfamily.

The enzyme catalyses [phosphate](n) + ATP = [phosphate](n+1) + ADP. Uses inorganic polyphosphate (polyP) as a donor to convert ADP to ATP. This Rhodopseudomonas palustris (strain ATCC BAA-98 / CGA009) protein is ADP-polyphosphate phosphotransferase.